Consider the following 76-residue polypeptide: Large ribosomal subunit protein eL38 (76 aa).

This sequence belongs to the eukaryotic ribosomal protein eL38 family.

This Lysiphlebus testaceipes (Greenbugs aphid parastoid) protein is Large ribosomal subunit protein eL38 (RpL38).